A 141-amino-acid chain; its full sequence is Acetyltransferase YpeA (141 aa).

The region spanning 1–141 (MEIRVFRQED…GKRLIEDEEY (141 aa)) is the N-acetyltransferase domain.

The protein belongs to the acetyltransferase family. YpeA subfamily.

The chain is Acetyltransferase YpeA (ypeA) from Escherichia coli (strain K12).